A 526-amino-acid chain; its full sequence is Beta,beta-carotene 15,15'-dioxygenase (526 aa).

Fe cation is bound by residues His172, His236, His307, and His512.

Belongs to the carotenoid oxygenase family. Fe(2+) is required as a cofactor.

The protein localises to the cytoplasm. Its subcellular location is the cytosol. The catalysed reaction is all-trans-beta-carotene + O2 = 2 all-trans-retinal. Its pathway is cofactor metabolism; retinol metabolism. Symmetrically cleaves beta-carotene into two molecules of retinal using a dioxygenase mechanism. The polypeptide is Beta,beta-carotene 15,15'-dioxygenase (Gallus gallus (Chicken)).